A 127-amino-acid chain; its full sequence is UPF0325 protein VIBHAR_03240 (127 aa).

The protein belongs to the UPF0325 family.

This chain is UPF0325 protein VIBHAR_03240, found in Vibrio campbellii (strain ATCC BAA-1116).